Consider the following 145-residue polypeptide: Secreted RxLR effector protein 100 (145 aa).

The N-terminal stretch at 1–19 (MRYLLLTFFTFHCQMVADA) is a signal peptide. The RxLR signature appears at 27–30 (RLLR). The interval 38–77 (SGEGKIEEAGMIVTTGAPTPENETMEHNEVPQSTTDTDQK) is disordered. N-linked (GlcNAc...) asparagine glycosylation is present at Asn-59.

It belongs to the RxLR effector family.

It is found in the secreted. Its subcellular location is the host nucleus. In terms of biological role, secreted effector that dos not suppress the host cell death induced by cell death-inducing proteins. In Plasmopara viticola (Downy mildew of grapevine), this protein is Secreted RxLR effector protein 100.